A 633-amino-acid chain; its full sequence is Glutamyl-tRNA(Gln) amidotransferase subunit E (633 aa).

A disordered region spans residues 415–437; it reads LDDGTTKFLRPQPGSARMYPETD.

This sequence belongs to the GatB/GatE family. GatE subfamily. Heterodimer of GatD and GatE.

The enzyme catalyses L-glutamyl-tRNA(Gln) + L-glutamine + ATP + H2O = L-glutaminyl-tRNA(Gln) + L-glutamate + ADP + phosphate + H(+). Allows the formation of correctly charged Gln-tRNA(Gln) through the transamidation of misacylated Glu-tRNA(Gln) in organisms which lack glutaminyl-tRNA synthetase. The reaction takes place in the presence of glutamine and ATP through an activated gamma-phospho-Glu-tRNA(Gln). The GatDE system is specific for glutamate and does not act on aspartate. This chain is Glutamyl-tRNA(Gln) amidotransferase subunit E, found in Saccharolobus solfataricus (strain ATCC 35092 / DSM 1617 / JCM 11322 / P2) (Sulfolobus solfataricus).